The chain runs to 394 residues: Probable peptidoglycan glycosyltransferase FtsW (394 aa).

The Cytoplasmic segment spans residues 1 to 27 (MSALRSVAGLLQRWLLPARPAGLYDRQ). A helical transmembrane segment spans residues 28–48 (LVVLALALMAVGLVIVASASI). Residues 49-64 (PEGIAINNDPFMFVKR) are Periplasmic-facing. Residues 65–85 (HGLFLVMALGISWFVLQVPMA) form a helical membrane-spanning segment. Residues 86 to 88 (RWQ) lie on the Cytoplasmic side of the membrane. Residues 89 to 109 (HYNGPMLVLAILMLVLVLLVG) form a helical membrane-spanning segment. At 110–123 (RSVNGSIRWLPLGP) the chain is on the periplasmic side. The chain crosses the membrane as a helical span at residues 124-144 (FNLQPAEFGKLALFVYLAGYL). Topologically, residues 145–154 (VRRQSEVRER) are cytoplasmic. The chain crosses the membrane as a helical span at residues 155 to 175 (FIGFMKPMAVLFVVAILLLAQ). Residue Pro176 is a topological domain, periplasmic. A helical transmembrane segment spans residues 177-197 (DLGSVVVMFVTSLGMLFLAGA). A topological domain (cytoplasmic) is located at residue Arg198. Residues 199 to 219 (LGQFIGLILVGVSAVVTLVIA) form a helical membrane-spanning segment. The Periplasmic portion of the chain corresponds to 220-279 (EPYRMRRVTSFLDPWADPFGSGYQLTQSLMAFGRGSWFGEGLGNSIQKMEYLPEAHTDFV). The chain crosses the membrane as a helical span at residues 280–300 (FAILGEELGYAGVLGALFLIF). Topologically, residues 301–322 (ALSFKALKLGHQALVAERLYEG) are cytoplasmic. Residues 323–343 (YLAIGIGIWFSFQTFVNVGAA) form a helical membrane-spanning segment. Residues 344–354 (SGMMPTKGLTL) are Periplasmic-facing. Residues 355-375 (PLVSYGGSSLIIMMVAVSMLV) traverse the membrane as a helical segment. Over 376 to 394 (RIDFELRQASAQARVREVS) the chain is Cytoplasmic.

Belongs to the SEDS family. FtsW subfamily.

The protein resides in the cell inner membrane. The enzyme catalyses [GlcNAc-(1-&gt;4)-Mur2Ac(oyl-L-Ala-gamma-D-Glu-L-Lys-D-Ala-D-Ala)](n)-di-trans,octa-cis-undecaprenyl diphosphate + beta-D-GlcNAc-(1-&gt;4)-Mur2Ac(oyl-L-Ala-gamma-D-Glu-L-Lys-D-Ala-D-Ala)-di-trans,octa-cis-undecaprenyl diphosphate = [GlcNAc-(1-&gt;4)-Mur2Ac(oyl-L-Ala-gamma-D-Glu-L-Lys-D-Ala-D-Ala)](n+1)-di-trans,octa-cis-undecaprenyl diphosphate + di-trans,octa-cis-undecaprenyl diphosphate + H(+). It functions in the pathway cell wall biogenesis; peptidoglycan biosynthesis. Functionally, peptidoglycan polymerase that is essential for cell division. This Aeromonas salmonicida (strain A449) protein is Probable peptidoglycan glycosyltransferase FtsW.